The chain runs to 203 residues: Ribosomal RNA large subunit methyltransferase E (203 aa).

Residues glycine 51, tryptophan 53, aspartate 69, aspartate 85, and aspartate 109 each contribute to the S-adenosyl-L-methionine site. Catalysis depends on lysine 149, which acts as the Proton acceptor.

Belongs to the class I-like SAM-binding methyltransferase superfamily. RNA methyltransferase RlmE family.

It is found in the cytoplasm. The catalysed reaction is uridine(2552) in 23S rRNA + S-adenosyl-L-methionine = 2'-O-methyluridine(2552) in 23S rRNA + S-adenosyl-L-homocysteine + H(+). Specifically methylates the uridine in position 2552 of 23S rRNA at the 2'-O position of the ribose in the fully assembled 50S ribosomal subunit. The polypeptide is Ribosomal RNA large subunit methyltransferase E (Methanoculleus marisnigri (strain ATCC 35101 / DSM 1498 / JR1)).